Here is a 440-residue protein sequence, read N- to C-terminus: Transposon Ty1-DR2 Gag polyprotein (440 aa).

Polar residues-rich tracts occupy residues 1-31 (MESQ…TTQD) and 137-168 (VGTH…TNQH). 3 disordered regions span residues 1–75 (MESQ…PQAA), 137–174 (VGTH…PPPI), and 350–440 (QQES…PGTY). The RNA-binding stretch occupies residues 299–401 (NNGIPINNKV…NSQSRTARAH (103 aa)). The segment covering 363 to 372 (SPSDEKKDSR) has biased composition (basic and acidic residues). Residues 373–409 (TYTNTTKPKSITRNSQKPNNSQSRTARAHNVSTSNNF) are compositionally biased toward polar residues. Basic and acidic residues predominate over residues 429–440 (NKHDLHLRPGTY).

In terms of assembly, homotrimer.

The protein localises to the cytoplasm. Its function is as follows. Capsid protein (CA) is the structural component of the virus-like particle (VLP), forming the shell that encapsulates the retrotransposons dimeric RNA genome. The particles are assembled from trimer-clustered units and there are holes in the capsid shells that allow for the diffusion of macromolecules. CA also has nucleocapsid-like chaperone activity, promoting primer tRNA(i)-Met annealing to the multipartite primer-binding site (PBS), dimerization of Ty1 RNA and initiation of reverse transcription. The chain is Transposon Ty1-DR2 Gag polyprotein (TY1A-DR2) from Saccharomyces cerevisiae (strain ATCC 204508 / S288c) (Baker's yeast).